Consider the following 333-residue polypeptide: Cell division protein FtsQ (333 aa).

The disordered stretch occupies residues 1–99 (MTGTGPHGDP…ARREAKRRAV (99 aa)). The Cytoplasmic portion of the chain corresponds to 1 to 118 (MTGTGPHGDP…VPRNTIRGLK (118 aa)). Acidic residues predominate over residues 11–22 (AEDPAGPDDTAA). Residues 44–57 (TTETTAQTGTTAEA) are compositionally biased toward low complexity. Residues 73 to 92 (ERAERRAARDRAMAIEQARR) are compositionally biased toward basic and acidic residues. Residues 119–139 (VLMWAALVSVLAVALGLLLYF) form a helical membrane-spanning segment. At 140-333 (TPIMSARNVE…VSSPDLPTVK (194 aa)) the chain is on the extracellular side. The 69-residue stretch at 143-211 (MSARNVEVSG…STLKISIVER (69 aa)) folds into the POTRA domain.

This sequence belongs to the FtsQ/DivIB family. FtsQ subfamily.

The protein resides in the cell membrane. In terms of biological role, essential cell division protein. The sequence is that of Cell division protein FtsQ from Mycolicibacterium smegmatis (strain ATCC 700084 / mc(2)155) (Mycobacterium smegmatis).